We begin with the raw amino-acid sequence, 66 residues long: Large ribosomal subunit protein bL33 (66 aa).

The protein belongs to the bacterial ribosomal protein bL33 family.

This chain is Large ribosomal subunit protein bL33, found in Synechococcus sp. (strain CC9311).